We begin with the raw amino-acid sequence, 98 residues long: NADH-ubiquinone oxidoreductase chain 4L (98 aa).

Helical transmembrane passes span 1-21, 29-49, and 59-79; these read MTAIYLNLTMAFSLALMGVLV, TLLCLEGMMLSLFILMTLLIT, and LPLTLLVFSACEAAIGLALLV.

This sequence belongs to the complex I subunit 4L family. In terms of assembly, core subunit of respiratory chain NADH dehydrogenase (Complex I) which is composed of 45 different subunits.

Its subcellular location is the mitochondrion inner membrane. The enzyme catalyses a ubiquinone + NADH + 5 H(+)(in) = a ubiquinol + NAD(+) + 4 H(+)(out). Its function is as follows. Core subunit of the mitochondrial membrane respiratory chain NADH dehydrogenase (Complex I) which catalyzes electron transfer from NADH through the respiratory chain, using ubiquinone as an electron acceptor. Part of the enzyme membrane arm which is embedded in the lipid bilayer and involved in proton translocation. In Notoryctes typhlops (Southern marsupial mole), this protein is NADH-ubiquinone oxidoreductase chain 4L (MT-ND4L).